The primary structure comprises 528 residues: GMP synthase [glutamine-hydrolyzing] (528 aa).

In terms of domain architecture, Glutamine amidotransferase type-1 spans 13–204 (SILILDFGSQ…VYKISCCTAD (192 aa)). Cys90 serves as the catalytic Nucleophile. Catalysis depends on residues His178 and Glu180. One can recognise a GMPS ATP-PPase domain in the interval 205–403 (WTTETYIEET…LGLPDEIIKR (199 aa)). 232–238 (SGGVDSS) is a binding site for ATP.

In terms of assembly, homodimer.

It catalyses the reaction XMP + L-glutamine + ATP + H2O = GMP + L-glutamate + AMP + diphosphate + 2 H(+). It functions in the pathway purine metabolism; GMP biosynthesis; GMP from XMP (L-Gln route): step 1/1. In terms of biological role, catalyzes the synthesis of GMP from XMP. The chain is GMP synthase [glutamine-hydrolyzing] from Prochlorococcus marinus (strain AS9601).